We begin with the raw amino-acid sequence, 132 residues long: ATP synthase epsilon chain (132 aa).

The protein belongs to the ATPase epsilon chain family. In terms of assembly, F-type ATPases have 2 components, CF(1) - the catalytic core - and CF(0) - the membrane proton channel. CF(1) has five subunits: alpha(3), beta(3), gamma(1), delta(1), epsilon(1). CF(0) has three main subunits: a, b and c.

The protein resides in the cell inner membrane. Functionally, produces ATP from ADP in the presence of a proton gradient across the membrane. The chain is ATP synthase epsilon chain from Anaeromyxobacter sp. (strain Fw109-5).